The sequence spans 448 residues: MSENNPVKYLADSDTECQRCKAVPAVLITRKEAFCKNCFIRFIRGKQRKSMIDERYKVKYGAVQEKIGQQKVLLALSGGVSSLVLTDVVASLLQEQIESHKGRMGFELVLLNIDEFELESLNKRIEEILPILVERYAPVNIQYKVLSIESFLIDRAMIQKVLLNKDFTAIAQRLSDEQNKYTVADMLKLCPNKSSMEDLLTVIYEELILRTAFIENCETIIYGHSMTRIANEILALTVRGRGSSVYKAIADHTVQFMDKEFTILFPLRDVLFAEIIAYADLIELNKLEVKSTIVKSKITKNLTIRDLTTNYFSHLDATGYASTASTVVKTGEKLGAPQFKHSYGRCQICGVEIYQDPKEWLRRITVNDAAPIETEEEQEYVNLYKEALSSSETLDTENTHPVNICYGCIVTLSGAKQDTAFVWPLKDKDTNHEDKKVLDEYILTDDEE.

The protein belongs to the CTU2/NCS2 family.

It is found in the cytoplasm. The protein operates within tRNA modification; 5-methoxycarbonylmethyl-2-thiouridine-tRNA biosynthesis. Functionally, plays a central role in 2-thiolation of mcm(5)S(2)U at tRNA wobble positions of tRNA(Lys), tRNA(Glu) and tRNA(Gln). May act by forming a heterodimer with NCS6 that ligates sulfur from thiocarboxylated URM1 onto the uridine of tRNAs at wobble position. Prior mcm(5) tRNA modification by the elongator complex is required for 2-thiolation. May also be involved in protein urmylation. This is Cytoplasmic tRNA 2-thiolation protein 2 from Scheffersomyces stipitis (strain ATCC 58785 / CBS 6054 / NBRC 10063 / NRRL Y-11545) (Yeast).